We begin with the raw amino-acid sequence, 462 residues long: Glycine--tRNA ligase (462 aa).

The substrate site is built by Arg-100 and Glu-174. Residues 206-208, 216-221, 290-291, and 334-337 each bind ATP; these read RNE, FRTREF, EL, and GVDR. 221 to 225 serves as a coordination point for substrate; it reads FEQME. 330 to 334 is a binding site for substrate; sequence EPSVG.

It belongs to the class-II aminoacyl-tRNA synthetase family. In terms of assembly, homodimer.

It localises to the cytoplasm. The catalysed reaction is tRNA(Gly) + glycine + ATP = glycyl-tRNA(Gly) + AMP + diphosphate. Catalyzes the attachment of glycine to tRNA(Gly). The sequence is that of Glycine--tRNA ligase from Alkaliphilus oremlandii (strain OhILAs) (Clostridium oremlandii (strain OhILAs)).